The primary structure comprises 514 residues: Maturase K (514 aa).

It belongs to the intron maturase 2 family. MatK subfamily.

It localises to the plastid. The protein localises to the chloroplast. Usually encoded in the trnK tRNA gene intron. Probably assists in splicing its own and other chloroplast group II introns. The chain is Maturase K from Zamia integrifolia (Coontie).